A 1060-amino-acid chain; its full sequence is RNA-binding protein 27 (1060 aa).

Disordered regions lie at residues 80 to 143, 160 to 278, and 319 to 416; these read PLEP…DGKW, YDWR…PKRR, and PPPG…PPPL. Basic and acidic residues-rich tracts occupy residues 84-102 and 124-143; these read VKPE…KEEV and SRSE…DGKW. A compositionally biased stretch (basic residues) spans 165–185; it reads GRSKSRSKSRGLSRSRSRSRG. Residues 186–211 are compositionally biased toward basic and acidic residues; sequence RSKDRDPNRNVEHRERSKFKSERNDL. Composition is skewed to low complexity over residues 225–235 and 255–268; these read SSEQYSSGAQS and SWSN…SSNS. Residues 273 to 301 form a C3H1-type zinc finger; that stretch reads PPPKRRCRDYDERGFCVLGDLCQFDHGND. Pro residues-rich tracts occupy residues 319–356 and 371–384; these read PPPG…PGPG and QPPP…PRPP. The segment covering 387–402 has biased composition (polar residues); it reads QSSLINSRDQPGTSAV. Threonine 447 carries the post-translational modification Phosphothreonine. Arginine 455 carries the post-translational modification Omega-N-methylarginine. The interval 572–594 is disordered; sequence LTKKPWLGKQGNNNQSKPGFLRK. The RRM domain maps to 600–674; the sequence is TKLEVKKIPQ…RFIRVLWHRE (75 aa). Positions 754–775 are disordered; sequence HASTNQSDTSHLLNQTGGSSGE. Residues 755-770 are compositionally biased toward polar residues; sequence ASTNQSDTSHLLNQTG. Positions 810-887 form a coiled coil; that stretch reads VQEVLKKKQE…KDELKTSSTV (78 aa). Serine 928 carries the post-translational modification Phosphoserine. The tract at residues 943-982 is disordered; it reads GRGKTISSQGRGRGRGRGRGRGSLNHMVVDHRPKALPGGG. 2 positions are modified to phosphoserine: serine 1012 and serine 1020. Positions 1014-1060 are disordered; that stretch reads HKPKVPSISTETEEEEVKEEETETSDLFLHDDDDEDEDEYESRSWRR. Acidic residues-rich tracts occupy residues 1024 to 1037 and 1044 to 1053; these read ETEE…ETET and DDDDEDEDEY.

Its subcellular location is the cytoplasm. The protein localises to the nucleus speckle. In terms of biological role, may be involved in the turnover of nuclear polyadenylated (pA+) RNA. This Mus musculus (Mouse) protein is RNA-binding protein 27.